The sequence spans 82 residues: uncharacterized protein (82 aa).

In terms of biological role, could be a silencing control element for the regulation of the restriction system. This is an uncharacterized protein from Herpetosiphon aurantiacus (Herpetosiphon giganteus).